A 403-amino-acid chain; its full sequence is Histidine--tRNA ligase (403 aa).

Belongs to the class-II aminoacyl-tRNA synthetase family. Homodimer.

The protein resides in the cytoplasm. It carries out the reaction tRNA(His) + L-histidine + ATP = L-histidyl-tRNA(His) + AMP + diphosphate + H(+). This Sulfurimonas denitrificans (strain ATCC 33889 / DSM 1251) (Thiomicrospira denitrificans (strain ATCC 33889 / DSM 1251)) protein is Histidine--tRNA ligase.